A 160-amino-acid chain; its full sequence is Cytochrome b6-f complex subunit 4 (160 aa).

The next 3 helical transmembrane spans lie at 36–56 (LLYI…GLAV), 95–115 (LLGI…PFIE), and 128–148 (IAMS…IGAC).

The protein belongs to the cytochrome b family. PetD subfamily. The 4 large subunits of the cytochrome b6-f complex are cytochrome b6, subunit IV (17 kDa polypeptide, PetD), cytochrome f and the Rieske protein, while the 4 small subunits are PetG, PetL, PetM and PetN. The complex functions as a dimer.

The protein resides in the cellular thylakoid membrane. Component of the cytochrome b6-f complex, which mediates electron transfer between photosystem II (PSII) and photosystem I (PSI), cyclic electron flow around PSI, and state transitions. The sequence is that of Cytochrome b6-f complex subunit 4 from Prochlorococcus marinus (strain MIT 9301).